A 297-amino-acid chain; its full sequence is uncharacterized protein (297 aa).

4 disordered regions span residues 12-43 (QNNN…TNDN), 65-85 (VPNS…DKPI), 122-151 (KVST…TNET), and 265-297 (SRLS…DQNN). Residues 65–79 (VPNSINVNTSSSGNK) are compositionally biased toward polar residues. Residues 122 to 135 (KVSTTTTTTSSTSK) are compositionally biased toward low complexity. The span at 140 to 151 (QTITKPNKTNET) shows a compositional bias: polar residues. Residues 268–287 (SSNNNNNNNNNNNNNNNNSN) show a composition bias toward low complexity.

This is an uncharacterized protein from Dictyostelium discoideum (Social amoeba).